We begin with the raw amino-acid sequence, 304 residues long: Acetaldehyde dehydrogenase (304 aa).

Cys-131 acts as the Acyl-thioester intermediate in catalysis. NAD(+) contacts are provided by residues 162 to 170 (SAGPGTRKN) and Asn-273.

Belongs to the acetaldehyde dehydrogenase family.

It catalyses the reaction acetaldehyde + NAD(+) + CoA = acetyl-CoA + NADH + H(+). The protein is Acetaldehyde dehydrogenase of Polaromonas naphthalenivorans (strain CJ2).